The chain runs to 378 residues: Glutamate 5-kinase (378 aa).

Lys-20 contributes to the ATP binding site. 3 residues coordinate substrate: Ser-60, Asp-147, and Asn-159. ATP contacts are provided by residues 179 to 180 (TD) and 221 to 227 (TGGMLTK). Residues 286 to 364 (RGRVVLDAGA…SQIARILGSM (79 aa)) enclose the PUA domain.

The protein belongs to the glutamate 5-kinase family.

The protein localises to the cytoplasm. It catalyses the reaction L-glutamate + ATP = L-glutamyl 5-phosphate + ADP. Its pathway is amino-acid biosynthesis; L-proline biosynthesis; L-glutamate 5-semialdehyde from L-glutamate: step 1/2. In terms of biological role, catalyzes the transfer of a phosphate group to glutamate to form L-glutamate 5-phosphate. This chain is Glutamate 5-kinase, found in Bordetella petrii (strain ATCC BAA-461 / DSM 12804 / CCUG 43448).